Here is a 199-residue protein sequence, read N- to C-terminus: Insertion sequence IS21-like putative ATP-binding protein (199 aa).

114–121 contacts ATP; that stretch reads GDSGTGKT.

Belongs to the IS21/IS1162 putative ATP-binding protein family.

The protein is Insertion sequence IS21-like putative ATP-binding protein (tnpB) of Bacteroides fragilis (strain YCH46).